The following is a 644-amino-acid chain: MTEEKASVRTYDPPEEFASRANVRDPGVYEEAARDYEGFWAERARKLHWFREWDEVLRWDPPEAQWFVGGKINASYNCLDYQVQQGRGDKRAIIWEGDEPGENRTLTYSELKAEVEKFANVLKGLGVRKGDAVSIYLPMIPELPIAMLACARIGAPHSVVFGAFSAQSLRDRINDCEAKVLVTADSGPRGGKRTPLKANADEALEDTPSIEKVVVVRRTGDEVNMVEGRDLWWHELMREAEPECPAEEMDSEDILYILYSSGSTGKPKGIVHTTGGYLTHVNTTTDWVFDLKEDDVYWCTADIGWVTGHSYIVYGPLSNGATALMFEGTPSYPANDRWWDIIERHGVTILYTAPTAIRAFMKQGPGPIEKHDLSSLRLLGSVGEPINPRAWEWYHEHVGGGRCPVVDTWWQTETGGIMISPLPGITRTKPGSATFPLPGIFAGIYDEEGNEIEGPGVGNLVIKRPWPGMLRTLYKDPERFRETYWQKYGDVYFSGDGARRDEDGYFWVTGRVDDVINVSGHRISTAEVESALVAHPAVAEAAVIGRYDEDTGQAIVAYVILEGGREGNDELAQELRQQVRKVIGAHARPQEIIFTPDLPKTRSGKIMRRILRSLSEGRDDLGDTTTLADPGVVESLKEQVAASR.

CoA is bound by residues 189 to 192 (RGGK) and Thr-307. ATP-binding positions include 383–385 (GEP), 407–412 (DTWWQT), Asp-496, and Arg-511. Residue Ser-519 coordinates CoA. Residue Arg-522 participates in ATP binding. Residues Val-533, His-535, and Val-538 each coordinate Mg(2+). Arg-580 serves as a coordination point for CoA. Lys-605 is modified (N6-acetyllysine).

Belongs to the ATP-dependent AMP-binding enzyme family. Requires Mg(2+) as cofactor. Post-translationally, acetylated. Deacetylation by the SIR2-homolog deacetylase activates the enzyme.

The enzyme catalyses acetate + ATP + CoA = acetyl-CoA + AMP + diphosphate. In terms of biological role, catalyzes the conversion of acetate into acetyl-CoA (AcCoA), an essential intermediate at the junction of anabolic and catabolic pathways. AcsA undergoes a two-step reaction. In the first half reaction, AcsA combines acetate with ATP to form acetyl-adenylate (AcAMP) intermediate. In the second half reaction, it can then transfer the acetyl group from AcAMP to the sulfhydryl group of CoA, forming the product AcCoA. The sequence is that of Acetyl-coenzyme A synthetase from Rubrobacter xylanophilus (strain DSM 9941 / JCM 11954 / NBRC 16129 / PRD-1).